The chain runs to 417 residues: Equilibrative nucleotide transporter 7 (417 aa).

A run of 11 helical transmembrane segments spans residues 19-39 (LVCC…LTIT), 54-74 (VLTI…ATKE), 84-104 (IFGY…DLAS), 110-130 (VVAY…DAFV), 143-163 (PDFI…TSVL), 184-204 (LFIG…TLVF), 264-284 (LGIN…GFLY), 293-315 (GDWY…RFIP), 326-346 (KWIT…YFTA), 353-373 (WMLF…VCIF), and 392-412 (MCVF…LWLI).

The protein belongs to the SLC29A/ENT transporter (TC 2.A.57) family. As to expression, expressed in leaves and flowers.

The protein localises to the cell membrane. In terms of biological role, nucleoside transporter that can mediate uptake of adenosine, uridine, guanosine or cytidine when expressed in a heterologous system (yeast). This chain is Equilibrative nucleotide transporter 7 (ENT7), found in Arabidopsis thaliana (Mouse-ear cress).